We begin with the raw amino-acid sequence, 735 residues long: Phosphoribosylformylglycinamidine synthase subunit PurL (735 aa).

The active site involves His49. The ATP site is built by Tyr52 and Lys91. A Mg(2+)-binding site is contributed by Glu93. Residues 94-97 (SHNH) and Arg116 contribute to the substrate site. Residue His95 is the Proton acceptor of the active site. Residue Asp117 participates in Mg(2+) binding. Gln240 contacts substrate. Asp268 provides a ligand contact to Mg(2+). 312-314 (ESQ) is a binding site for substrate. 2 residues coordinate ATP: Asp493 and Gly530. Mg(2+) is bound at residue Asn531. Ser533 is a substrate binding site.

The protein belongs to the FGAMS family. Monomer. Part of the FGAM synthase complex composed of 1 PurL, 1 PurQ and 2 PurS subunits.

It is found in the cytoplasm. The catalysed reaction is N(2)-formyl-N(1)-(5-phospho-beta-D-ribosyl)glycinamide + L-glutamine + ATP + H2O = 2-formamido-N(1)-(5-O-phospho-beta-D-ribosyl)acetamidine + L-glutamate + ADP + phosphate + H(+). Its pathway is purine metabolism; IMP biosynthesis via de novo pathway; 5-amino-1-(5-phospho-D-ribosyl)imidazole from N(2)-formyl-N(1)-(5-phospho-D-ribosyl)glycinamide: step 1/2. Part of the phosphoribosylformylglycinamidine synthase complex involved in the purines biosynthetic pathway. Catalyzes the ATP-dependent conversion of formylglycinamide ribonucleotide (FGAR) and glutamine to yield formylglycinamidine ribonucleotide (FGAM) and glutamate. The FGAM synthase complex is composed of three subunits. PurQ produces an ammonia molecule by converting glutamine to glutamate. PurL transfers the ammonia molecule to FGAR to form FGAM in an ATP-dependent manner. PurS interacts with PurQ and PurL and is thought to assist in the transfer of the ammonia molecule from PurQ to PurL. This chain is Phosphoribosylformylglycinamidine synthase subunit PurL, found in Methylocella silvestris (strain DSM 15510 / CIP 108128 / LMG 27833 / NCIMB 13906 / BL2).